The following is a 213-amino-acid chain: 3-isopropylmalate dehydratase small subunit (213 aa).

It belongs to the LeuD family. LeuD type 1 subfamily. As to quaternary structure, heterodimer of LeuC and LeuD.

The catalysed reaction is (2R,3S)-3-isopropylmalate = (2S)-2-isopropylmalate. It functions in the pathway amino-acid biosynthesis; L-leucine biosynthesis; L-leucine from 3-methyl-2-oxobutanoate: step 2/4. Catalyzes the isomerization between 2-isopropylmalate and 3-isopropylmalate, via the formation of 2-isopropylmaleate. This chain is 3-isopropylmalate dehydratase small subunit, found in Pseudomonas savastanoi pv. phaseolicola (strain 1448A / Race 6) (Pseudomonas syringae pv. phaseolicola (strain 1448A / Race 6)).